The chain runs to 137 residues: Type III secretion protein HrcQb (137 aa).

The span at 1–22 shows a compositional bias: acidic residues; that stretch reads MSTEDLYQDDVESLEDYDDETA. The interval 1–67 is disordered; that stretch reads MSTEDLYQDD…EQQAPSGLDS (67 aa). A compositionally biased stretch (basic and acidic residues) spans 23–33; that stretch reads EQEHEHEHEQQ. Over residues 36 to 58 the composition is skewed to acidic residues; it reads EPDDESEYAEAEPDDDEQEEQEE.

This sequence belongs to the FliN/MopA/SpaO family. Homotetramer. The four monomers assemble into two tightly bound homodimers. Interacts with HrcQa.

Its subcellular location is the cytoplasm. Component of the type III secretion system, which is required for effector protein delivery, parasitism, and pathogenicity. Probably participates in the formation of a C-ring-like assembly along with HrcQa. This Pseudomonas syringae pv. tomato (strain ATCC BAA-871 / DC3000) protein is Type III secretion protein HrcQb (hrcQb).